A 245-amino-acid polypeptide reads, in one-letter code: MKIIFNADDFGISPGAVYGILESYKRGVVKSTTLLANSPAFDLAVEVAKENPGLDIGAHLTLTFGSPVLQGLETLTDDDGRFRRNYTALENGLADVDMNEVERELTAQIEKILDAGITISHFDTHHSIEPLIYPVQHKLAEKYGVSIRRHSDVSDFGAIKTPDLFATEFYADGVSFETIKKLVQEHIGTNDVVEVMTHPAYIDETLREISSYVEPRIKEVSILTSRELQAYLGQQEVEIISFRDL.

Positions 59 and 125 each coordinate Mg(2+).

Belongs to the YdjC deacetylase family. In terms of assembly, homodimer. It depends on Mg(2+) as a cofactor.

In terms of biological role, probably catalyzes the deacetylation of acetylated carbohydrates an important step in the degradation of oligosaccharides. This chain is Carbohydrate deacetylase, found in Listeria monocytogenes serotype 4a (strain HCC23).